A 617-amino-acid chain; its full sequence is Secretogranin-2 (617 aa).

The N-terminal stretch at 1 to 27 (MAEAKTHWLGAALSLIPLIFLISGAEA) is a signal peptide. The propeptide occupies 28–30 (ASF). Positions 120–143 (QAENEPQSAPKENKPYALNSEKNF) are disordered. Position 151 is a sulfotyrosine (tyrosine 151). Serine 174 is modified (phosphoserine). Positions 182–200 (TNEIVEEQYTPQSLATLES) are O-glycosylated at one site. Composition is skewed to basic and acidic residues over residues 257-284 (IESQ…EMKR) and 293-302 (EDLRKESKDQ). The tract at residues 257-302 (IESQTQEEVRDSKENIEKNEQINDEMKRSGQLGIQEEDLRKESKDQ) is disordered. Residue serine 268 is modified to Phosphoserine. A phosphoserine mark is found at serine 432, serine 532, serine 555, and serine 556. Residues 552–583 (NQGSSQETDKLAPVSKRFPVGPPKNDDTPNRQ) form a disordered region.

Belongs to the chromogranin/secretogranin protein family. As to quaternary structure, interacts with Secretogranin III/SCG3. O-glycosylated.

The protein resides in the secreted. Neuroendocrine protein of the granin family that regulates the biogenesis of secretory granules. The chain is Secretogranin-2 (SCG2) from Homo sapiens (Human).